Reading from the N-terminus, the 446-residue chain is Exodeoxyribonuclease 7 large subunit (446 aa).

This sequence belongs to the XseA family. Heterooligomer composed of large and small subunits.

It localises to the cytoplasm. It carries out the reaction Exonucleolytic cleavage in either 5'- to 3'- or 3'- to 5'-direction to yield nucleoside 5'-phosphates.. Functionally, bidirectionally degrades single-stranded DNA into large acid-insoluble oligonucleotides, which are then degraded further into small acid-soluble oligonucleotides. The protein is Exodeoxyribonuclease 7 large subunit of Vibrio cholerae serotype O1 (strain ATCC 39315 / El Tor Inaba N16961).